A 38-amino-acid chain; its full sequence is MKVRASVKKMCDKCRVIRRHGRVMVICTASPRHKQRQG.

This sequence belongs to the bacterial ribosomal protein bL36 family.

This is Large ribosomal subunit protein bL36B from Prochlorococcus marinus (strain MIT 9515).